Here is a 364-residue protein sequence, read N- to C-terminus: Probable dual-specificity RNA methyltransferase RlmN (364 aa).

The active-site Proton acceptor is the glutamate 106. The 239-residue stretch at tyrosine 112–arginine 350 folds into the Radical SAM core domain. A disulfide bridge connects residues cysteine 119 and cysteine 356. Cysteine 126, cysteine 130, and cysteine 133 together coordinate [4Fe-4S] cluster. S-adenosyl-L-methionine is bound by residues glycine 177–glutamate 178, serine 211, serine 234–histidine 236, and asparagine 313. Cysteine 356 functions as the S-methylcysteine intermediate in the catalytic mechanism.

The protein belongs to the radical SAM superfamily. RlmN family. It depends on [4Fe-4S] cluster as a cofactor.

The protein resides in the cytoplasm. It carries out the reaction adenosine(2503) in 23S rRNA + 2 reduced [2Fe-2S]-[ferredoxin] + 2 S-adenosyl-L-methionine = 2-methyladenosine(2503) in 23S rRNA + 5'-deoxyadenosine + L-methionine + 2 oxidized [2Fe-2S]-[ferredoxin] + S-adenosyl-L-homocysteine. The catalysed reaction is adenosine(37) in tRNA + 2 reduced [2Fe-2S]-[ferredoxin] + 2 S-adenosyl-L-methionine = 2-methyladenosine(37) in tRNA + 5'-deoxyadenosine + L-methionine + 2 oxidized [2Fe-2S]-[ferredoxin] + S-adenosyl-L-homocysteine. Its function is as follows. Specifically methylates position 2 of adenine 2503 in 23S rRNA and position 2 of adenine 37 in tRNAs. This Mycobacterium bovis (strain ATCC BAA-935 / AF2122/97) protein is Probable dual-specificity RNA methyltransferase RlmN.